Consider the following 184-residue polypeptide: Holliday junction branch migration complex subunit RuvA (184 aa).

The segment at 1–62 (MIVGLVGEVL…EDSESLYGFV (62 aa)) is domain I. The domain II stretch occupies residues 63–134 (DINEKKMFDR…ELGEFDISES (72 aa)). Residues 134 to 135 (SN) form a flexible linker region. Positions 136-184 (VTSSAFQEASMALQSLGFKKEQIQKALQECTATDTASLVKEALKKIQKL) are domain III.

Belongs to the RuvA family. Homotetramer. Forms an RuvA(8)-RuvB(12)-Holliday junction (HJ) complex. HJ DNA is sandwiched between 2 RuvA tetramers; dsDNA enters through RuvA and exits via RuvB. An RuvB hexamer assembles on each DNA strand where it exits the tetramer. Each RuvB hexamer is contacted by two RuvA subunits (via domain III) on 2 adjacent RuvB subunits; this complex drives branch migration. In the full resolvosome a probable DNA-RuvA(4)-RuvB(12)-RuvC(2) complex forms which resolves the HJ.

The protein resides in the cytoplasm. Its function is as follows. The RuvA-RuvB-RuvC complex processes Holliday junction (HJ) DNA during genetic recombination and DNA repair, while the RuvA-RuvB complex plays an important role in the rescue of blocked DNA replication forks via replication fork reversal (RFR). RuvA specifically binds to HJ cruciform DNA, conferring on it an open structure. The RuvB hexamer acts as an ATP-dependent pump, pulling dsDNA into and through the RuvAB complex. HJ branch migration allows RuvC to scan DNA until it finds its consensus sequence, where it cleaves and resolves the cruciform DNA. The chain is Holliday junction branch migration complex subunit RuvA from Nitratiruptor sp. (strain SB155-2).